The sequence spans 35 residues: U1-segestritoxin-Sf1a (35 aa).

Cystine bridges form between C10-C22 and C17-C28. The segment at 31-33 is keys region for toxin activity; the sequence is DPW.

The protein belongs to the neurotoxin 16 (SFI) family. In terms of tissue distribution, expressed by the venom gland.

The protein resides in the secreted. In terms of biological role, insecticidal toxin. The polypeptide is U1-segestritoxin-Sf1a (Segestria florentina (Tube-web spider)).